The primary structure comprises 937 residues: Protein translocase subunit SecA (937 aa).

ATP contacts are provided by residues Gln90, 108 to 112 (GEGKT), and Asp509.

This sequence belongs to the SecA family. In terms of assembly, monomer and homodimer. Part of the essential Sec protein translocation apparatus which comprises SecA, SecYEG and auxiliary proteins SecDF. Other proteins may also be involved.

It is found in the cell inner membrane. Its subcellular location is the cellular thylakoid membrane. The protein resides in the cytoplasm. The enzyme catalyses ATP + H2O + cellular proteinSide 1 = ADP + phosphate + cellular proteinSide 2.. Functionally, part of the Sec protein translocase complex. Interacts with the SecYEG preprotein conducting channel. Has a central role in coupling the hydrolysis of ATP to the transfer of proteins into and across the cell membrane, serving as an ATP-driven molecular motor driving the stepwise translocation of polypeptide chains across the membrane. Probably participates in protein translocation into and across both the cytoplasmic and thylakoid membranes in cyanobacterial cells. This Parasynechococcus marenigrum (strain WH8102) protein is Protein translocase subunit SecA.